The chain runs to 691 residues: Elongation factor G (691 aa).

One can recognise a tr-type G domain in the interval Glu8–Val282. GTP contacts are provided by residues Ala17 to Thr24, Asp81 to His85, and Asn135 to Asp138.

The protein belongs to the TRAFAC class translation factor GTPase superfamily. Classic translation factor GTPase family. EF-G/EF-2 subfamily.

Its subcellular location is the cytoplasm. Its function is as follows. Catalyzes the GTP-dependent ribosomal translocation step during translation elongation. During this step, the ribosome changes from the pre-translocational (PRE) to the post-translocational (POST) state as the newly formed A-site-bound peptidyl-tRNA and P-site-bound deacylated tRNA move to the P and E sites, respectively. Catalyzes the coordinated movement of the two tRNA molecules, the mRNA and conformational changes in the ribosome. This chain is Elongation factor G, found in Prochlorococcus marinus (strain MIT 9211).